Here is a 661-residue protein sequence, read N- to C-terminus: MFKVYSDFSPSGDQPEAIKKLVEGLQKGYRIQTLLGVTGSGKTFTMAKVVEKVGKPTLIISPNKTLAAQLYSEFKSFFPENKVEFFVSYYDYYQPEAYIPTRDLYIEKNADINEVIEKMRISAIKSIMTRKDVIVVASVSAIYNCGDPKDFSDLNFVLSVGQEIDLEGFLTHLARIGYERKEEVALGGTFRVKGDVIEIYPRYQDEGIRIELFGDEIDSIYTFDPLNRKILEKLDRVVIYPTKEFITTEEKIQRAVKSILKELEEQLEYFKKQGKHLEAERLKQRTMNDIELLTALGYCSGIENYSRHFDGRNPGDPPYSLLDYFGDDYLVFIDESHITIPQLRAMYRGDFSRKKNLVDYGFRLPCAYDNRPLKFEEFWNKVKNVIFVSATPGDFEINNSQQVVEQIIRPTGLVDPEVEVRPTQNQIDDLVNEIAKIRKRNERALVTVLTKKTAEKLAEYLIEMGIKALYIHSELDTIERVEVLKKLRRGDVEVVVGVNLLREGLDLPEVSLVAILDSDTEGFLRSETTLIQIIGRVARNINGKVIMYADKITPAMKKAIDETNRRRKIQIEYNKKHGITPKTIIKPLDEEIFKQFMTDEDEEKEEIKTIFELKESLSIEEYIALLEEEMYKAASELRYEDAARLRDELFNIREKLKNKSF.

The region spanning Glu-23–Arg-180 is the Helicase ATP-binding domain. Gly-36–Thr-43 lines the ATP pocket. Positions Tyr-89–Ile-112 match the Beta-hairpin motif. A Helicase C-terminal domain is found at Gln-426–Ile-592. The UVR domain occupies Glu-620–Lys-655.

It belongs to the UvrB family. Forms a heterotetramer with UvrA during the search for lesions. Interacts with UvrC in an incision complex.

It is found in the cytoplasm. The UvrABC repair system catalyzes the recognition and processing of DNA lesions. A damage recognition complex composed of 2 UvrA and 2 UvrB subunits scans DNA for abnormalities. Upon binding of the UvrA(2)B(2) complex to a putative damaged site, the DNA wraps around one UvrB monomer. DNA wrap is dependent on ATP binding by UvrB and probably causes local melting of the DNA helix, facilitating insertion of UvrB beta-hairpin between the DNA strands. Then UvrB probes one DNA strand for the presence of a lesion. If a lesion is found the UvrA subunits dissociate and the UvrB-DNA preincision complex is formed. This complex is subsequently bound by UvrC and the second UvrB is released. If no lesion is found, the DNA wraps around the other UvrB subunit that will check the other stand for damage. The polypeptide is UvrABC system protein B (Thermosipho africanus (strain TCF52B)).